A 408-amino-acid polypeptide reads, in one-letter code: Eukaryotic initiation factor 4A-II (408 aa).

The segment at 1 to 22 is disordered; the sequence is MSGGSADYNSREHGGPEGMDPD. The Q motif signature appears at 34-62; the sequence is DNFDDMNLKESLLRGIYAYGFEKPSAIQQ. The Helicase ATP-binding domain occupies 65–236; the sequence is IIPCIKGYDV…KKFMRDPIRI (172 aa). ATP is bound at residue 77 to 84; it reads QAQSGTGK. A Phosphothreonine modification is found at T160. The short motif at 183–186 is the DEAD box element; sequence LDEA. A Helicase C-terminal domain is found at 247–408; that stretch reads GIKQFYINVE…EMPMNVADLI (162 aa).

Belongs to the DEAD box helicase family. eIF4A subfamily. As to quaternary structure, eIF4F is a multi-subunit complex, the composition of which varies with external and internal environmental conditions. It is composed of at least EIF4A, EIF4E and EIF4G1/EIFFG3. Interacts with EIF4E. May interact with NOM1.

It catalyses the reaction ATP + H2O = ADP + phosphate + H(+). ATP-dependent RNA helicase which is a subunit of the eIF4F complex involved in cap recognition and is required for mRNA binding to ribosome. In the current model of translation initiation, eIF4A unwinds RNA secondary structures in the 5'-UTR of mRNAs which is necessary to allow efficient binding of the small ribosomal subunit, and subsequent scanning for the initiator codon. The polypeptide is Eukaryotic initiation factor 4A-II (EIF4A2) (Macaca fascicularis (Crab-eating macaque)).